The following is a 284-amino-acid chain: Bifunctional protein FolD (284 aa).

Residues 164 to 166 (GRS) and Ser-189 each bind NADP(+).

This sequence belongs to the tetrahydrofolate dehydrogenase/cyclohydrolase family. In terms of assembly, homodimer.

It carries out the reaction (6R)-5,10-methylene-5,6,7,8-tetrahydrofolate + NADP(+) = (6R)-5,10-methenyltetrahydrofolate + NADPH. The catalysed reaction is (6R)-5,10-methenyltetrahydrofolate + H2O = (6R)-10-formyltetrahydrofolate + H(+). Its pathway is one-carbon metabolism; tetrahydrofolate interconversion. Catalyzes the oxidation of 5,10-methylenetetrahydrofolate to 5,10-methenyltetrahydrofolate and then the hydrolysis of 5,10-methenyltetrahydrofolate to 10-formyltetrahydrofolate. The chain is Bifunctional protein FolD from Listeria welshimeri serovar 6b (strain ATCC 35897 / DSM 20650 / CCUG 15529 / CIP 8149 / NCTC 11857 / SLCC 5334 / V8).